The primary structure comprises 118 residues: Non-specific lipid-transfer protein 1 (118 aa).

Residues 1–25 (MASLRVSCLVALMCMVVISAPMAEA) form the signal peptide. Cystine bridges form between Cys-29-Cys-76, Cys-39-Cys-53, Cys-54-Cys-99, and Cys-74-Cys-113.

This sequence belongs to the plant LTP family.

Its function is as follows. Plant non-specific lipid-transfer proteins transfer phospholipids as well as galactolipids across membranes. May play a role in wax or cutin deposition in the cell walls of expanding epidermal cells and certain secretory tissues. The sequence is that of Non-specific lipid-transfer protein 1 from Lens culinaris (Lentil).